A 244-amino-acid chain; its full sequence is rRNA adenine N-6-methyltransferase (244 aa).

The S-adenosyl-L-methionine site is built by asparagine 11, isoleucine 13, glycine 38, glutamate 59, aspartate 84, and asparagine 101.

It belongs to the class I-like SAM-binding methyltransferase superfamily. rRNA adenine N(6)-methyltransferase family.

The enzyme catalyses adenosine(2085) in 23S rRNA + 2 S-adenosyl-L-methionine = N(6)-dimethyladenosine(2085) in 23S rRNA + 2 S-adenosyl-L-homocysteine + 2 H(+). Functionally, this protein produces a dimethylation of the adenine residue at position 2085 in 23S rRNA, resulting in reduced affinity between ribosomes and macrolide-lincosamide-streptogramin B antibiotics. Is involved in erythromycin resistance. This Limosilactobacillus reuteri (Lactobacillus reuteri) protein is rRNA adenine N-6-methyltransferase (ermGT).